The sequence spans 33 residues: U23-ctenitoxin-Pn1a (33 aa).

3 cysteine pairs are disulfide-bonded: Cys-3/Cys-16, Cys-10/Cys-21, and Cys-15/Cys-30.

In terms of tissue distribution, expressed by the venom gland.

The protein resides in the secreted. Functionally, non-toxic to mice. The protein is U23-ctenitoxin-Pn1a of Phoneutria nigriventer (Brazilian armed spider).